A 173-amino-acid chain; its full sequence is ATP synthase subunit b (173 aa).

The chain crosses the membrane as a helical span at residues 25–45 (LINLVIVIGVLYWFLKGFLGG).

Belongs to the ATPase B chain family. F-type ATPases have 2 components, F(1) - the catalytic core - and F(0) - the membrane proton channel. F(1) has five subunits: alpha(3), beta(3), gamma(1), delta(1), epsilon(1). F(0) has four main subunits: a(1), b(1), b'(1) and c(10-14). The alpha and beta chains form an alternating ring which encloses part of the gamma chain. F(1) is attached to F(0) by a central stalk formed by the gamma and epsilon chains, while a peripheral stalk is formed by the delta, b and b' chains.

It localises to the cellular thylakoid membrane. F(1)F(0) ATP synthase produces ATP from ADP in the presence of a proton or sodium gradient. F-type ATPases consist of two structural domains, F(1) containing the extramembraneous catalytic core and F(0) containing the membrane proton channel, linked together by a central stalk and a peripheral stalk. During catalysis, ATP synthesis in the catalytic domain of F(1) is coupled via a rotary mechanism of the central stalk subunits to proton translocation. In terms of biological role, component of the F(0) channel, it forms part of the peripheral stalk, linking F(1) to F(0). The chain is ATP synthase subunit b from Synechococcus sp. (strain CC9311).